We begin with the raw amino-acid sequence, 360 residues long: Aminomethyltransferase (360 aa).

Belongs to the GcvT family. The glycine cleavage system is composed of four proteins: P, T, L and H.

The catalysed reaction is N(6)-[(R)-S(8)-aminomethyldihydrolipoyl]-L-lysyl-[protein] + (6S)-5,6,7,8-tetrahydrofolate = N(6)-[(R)-dihydrolipoyl]-L-lysyl-[protein] + (6R)-5,10-methylene-5,6,7,8-tetrahydrofolate + NH4(+). The glycine cleavage system catalyzes the degradation of glycine. In Methylococcus capsulatus (strain ATCC 33009 / NCIMB 11132 / Bath), this protein is Aminomethyltransferase.